A 220-amino-acid chain; its full sequence is Probable septum site-determining protein MinC (220 aa).

Belongs to the MinC family. Interacts with MinD and FtsZ.

Functionally, cell division inhibitor that blocks the formation of polar Z ring septums. Rapidly oscillates between the poles of the cell to destabilize FtsZ filaments that have formed before they mature into polar Z rings. Prevents FtsZ polymerization. The chain is Probable septum site-determining protein MinC from Vibrio parahaemolyticus serotype O3:K6 (strain RIMD 2210633).